The sequence spans 314 residues: Testisin (314 aa).

An N-terminal signal peptide occupies residues 1 to 19; the sequence is MGARGALLLALLLARAGLR. A propeptide spanning residues 20–41 is cleaved from the precursor; that stretch reads KPESQEAAPLSGPCGRRVITSR. Cystine bridges form between Cys-33–Cys-157 and Cys-67–Cys-83. The Peptidase S1 domain maps to 42-286; that stretch reads IVGGEDAELG…HFEWIQKLMA (245 aa). Active-site charge relay system residues include His-82 and Asp-137. 2 N-linked (GlcNAc...) asparagine glycosylation sites follow: Asn-167 and Asn-200. Disulfide bonds link Cys-171–Cys-244, Cys-204–Cys-223, and Cys-234–Cys-262. Catalysis depends on Ser-238, which acts as the Charge relay system. A glycan (N-linked (GlcNAc...) asparagine) is linked at Asn-273. The GPI-anchor amidated serine moiety is linked to residue Ser-288. A propeptide spans 289 to 314 (removed in mature form); that stretch reads GMSQPDPSWPLLFFPLLWALPLLGPV.

Belongs to the peptidase S1 family. Expressed predominantly in premeiotic testicular germ cells, mostly late pachytene and diplotene spermatocytes.

It localises to the cell membrane. Could regulate proteolytic events associated with testicular germ cell maturation. The sequence is that of Testisin (PRSS21) from Homo sapiens (Human).